Reading from the N-terminus, the 295-residue chain is Homeobox protein XHOX-7.1 (295 aa).

Disordered stretches follow at residues 75–115 (RKPG…PISL) and 134–175 (KPES…KPRT). The segment covering 84 to 97 (SSPTGSPLAGTSHS) has biased composition (polar residues). Residues 141–153 (SSWIQSPSFSPSP) show a composition bias toward low complexity. Positions 164–174 (LRKHKTNRKPR) are enriched in basic residues. Positions 170–229 (NRKPRTPFTTSQLLALERKFRQKQYLSIAERAEFSSSLNLTETQVKIWFQNRRAKAKRLQ) form a DNA-binding region, homeobox.

The protein belongs to the Msh homeobox family.

It localises to the nucleus. This is Homeobox protein XHOX-7.1 from Xenopus laevis (African clawed frog).